The following is an 891-amino-acid chain: 26S proteasome non-ATPase regulatory subunit 2 homolog B (891 aa).

Residues 1 to 43 are disordered; it reads MAPVPDPNSVGGGAKRDEATTKIPSKDSKKKDDKKEEDLSEED. Over residues 14-37 the composition is skewed to basic and acidic residues; it reads AKRDEATTKIPSKDSKKKDDKKEE. PC repeat units follow at residues 414-447, 448-484, 485-519, 522-556, 565-594, 674-705, and 724-739; these read SAVA…PVVA, GALL…SVRI, GAIM…PLDV, FAAL…AELG, LGLG…KIRK, LALG…EVAM, and AGML…KDAS.

The protein belongs to the proteasome subunit S2 family. As to quaternary structure, component of the 19S regulatory particle (RP/PA700) base subcomplex of the 26S proteasome. The 26S proteasome is composed of a core protease (CP), known as the 20S proteasome, capped at one or both ends by the 19S regulatory particle (RP/PA700). The RP/PA700 complex is composed of at least 17 different subunits in two subcomplexes, the base and the lid, which form the portions proximal and distal to the 20S proteolytic core, respectively. In terms of processing, ubiquitinated. In terms of tissue distribution, expressed in stems, leaves, buds, flowers, siliques and developing seeds.

Acts as a regulatory subunit of the 26 proteasome which is involved in the ATP-dependent degradation of ubiquitinated proteins. This Arabidopsis thaliana (Mouse-ear cress) protein is 26S proteasome non-ATPase regulatory subunit 2 homolog B (RPN1B).